Reading from the N-terminus, the 228-residue chain is Elongation factor 1-beta (228 aa).

The tract at residues 74–116 (ASKAFTAYGPEGSEASANPKDKPAEEEEEEDLFASDSEDEDPA) is disordered. The igE-binding stretch occupies residues 84–93 (EGSEASANPK). Positions 97–115 (AEEEEEEDLFASDSEDEDP) are enriched in acidic residues.

The protein belongs to the EF-1-beta/EF-1-delta family. As to quaternary structure, EF-1 is composed of 4 subunits: alpha, beta, delta, and gamma.

EF-1-beta and EF-1-delta stimulate the exchange of GDP bound to EF-1-alpha to GTP. In Penicillium citrinum, this protein is Elongation factor 1-beta.